The chain runs to 273 residues: 1,4-dihydroxy-2-naphthoyl-CoA synthase (273 aa).

Residues Arg34, 73–77, Tyr85, 117–121, Thr143, Ser149, Tyr246, and Lys261 each bind substrate; these read SGGDQ and YAVGG. 142–144 lines the hydrogencarbonate pocket; the sequence is QTG. Residues 254 to 265 show a composition bias toward basic and acidic residues; that stretch reads GRDAFKEKRDPD. Positions 254 to 273 are disordered; the sequence is GRDAFKEKRDPDFDQFPKFP.

The protein belongs to the enoyl-CoA hydratase/isomerase family. MenB subfamily. It depends on hydrogencarbonate as a cofactor.

The enzyme catalyses 2-succinylbenzoyl-CoA + H(+) = 1,4-dihydroxy-2-naphthoyl-CoA + H2O. It functions in the pathway quinol/quinone metabolism; 1,4-dihydroxy-2-naphthoate biosynthesis; 1,4-dihydroxy-2-naphthoate from chorismate: step 6/7. Its pathway is quinol/quinone metabolism; menaquinone biosynthesis. Converts o-succinylbenzoyl-CoA (OSB-CoA) to 1,4-dihydroxy-2-naphthoyl-CoA (DHNA-CoA). The sequence is that of 1,4-dihydroxy-2-naphthoyl-CoA synthase from Staphylococcus aureus (strain MRSA252).